A 94-amino-acid chain; its full sequence is Small ribosomal subunit protein uS19 (94 aa).

This sequence belongs to the universal ribosomal protein uS19 family.

Functionally, protein S19 forms a complex with S13 that binds strongly to the 16S ribosomal RNA. The protein is Small ribosomal subunit protein uS19 of Syntrophomonas wolfei subsp. wolfei (strain DSM 2245B / Goettingen).